A 388-amino-acid chain; its full sequence is Succinate--CoA ligase [ADP-forming] subunit beta (388 aa).

An ATP-grasp domain is found at 9–245 (KELLASYGLP…KSQENERELK (237 aa)). ATP contacts are provided by residues Lys-46, 53–55 (GRG), Glu-100, Tyr-103, and Glu-108. The Mg(2+) site is built by Asn-200 and Asp-214. Residues Asn-265 and 322-324 (GIV) each bind substrate.

The protein belongs to the succinate/malate CoA ligase beta subunit family. Heterotetramer of two alpha and two beta subunits. Mg(2+) is required as a cofactor.

The enzyme catalyses succinate + ATP + CoA = succinyl-CoA + ADP + phosphate. It catalyses the reaction GTP + succinate + CoA = succinyl-CoA + GDP + phosphate. The protein operates within carbohydrate metabolism; tricarboxylic acid cycle; succinate from succinyl-CoA (ligase route): step 1/1. In terms of biological role, succinyl-CoA synthetase functions in the citric acid cycle (TCA), coupling the hydrolysis of succinyl-CoA to the synthesis of either ATP or GTP and thus represents the only step of substrate-level phosphorylation in the TCA. The beta subunit provides nucleotide specificity of the enzyme and binds the substrate succinate, while the binding sites for coenzyme A and phosphate are found in the alpha subunit. The protein is Succinate--CoA ligase [ADP-forming] subunit beta of Neisseria meningitidis serogroup A / serotype 4A (strain DSM 15465 / Z2491).